Consider the following 462-residue polypeptide: Sensor histidine kinase RegB (462 aa).

The Cytoplasmic portion of the chain corresponds to 1-25; sequence MILGPDGILNRDTRGDWVRLRTLIL. A helical membrane pass occupies residues 26–45; it reads LRWMAVAGQLAAIVVTDWYL. Topologically, residues 46–51 are extracellular; sequence GVRLPM. The helical transmembrane segment at 52–70 threads the bilayer; it reads GLCFMAVGASVIANVIATF. Residues 71-78 lie on the Cytoplasmic side of the membrane; that stretch reads VFPQNRRL. Residues 79 to 96 form a helical membrane-spanning segment; the sequence is TEFQALMILLFDLTQLSF. At 97–103 the chain is on the extracellular side; the sequence is LLFLTGG. Residues 104–123 form a helical membrane-spanning segment; it reads LTNPFALLILAPVTISALAL. At 124–129 the chain is on the cytoplasmic side; the sequence is ELRTTV. The chain crosses the membrane as a helical span at residues 130–149; it reads ILGAIAIGLLTFTAYFHLPL. Residues 150–164 are Extracellular-facing; the sequence is ILADGSSLSVPRMFE. Residues 165 to 182 form a helical membrane-spanning segment; sequence FGFWLAIVIGILFLGLYS. Topologically, residues 183–462 are cytoplasmic; that stretch reads RRVAIEIRSM…PLGENVLIQT (280 aa). The Histidine kinase domain occupies 218–445; it reads AAAHELGTPL…IVEVIWPVDR (228 aa). His221 carries the phosphohistidine; by autocatalysis modification.

Its subcellular location is the cell inner membrane. It carries out the reaction ATP + protein L-histidine = ADP + protein N-phospho-L-histidine.. In terms of biological role, member of the two-component regulatory system RegB/RegA. Involved in the positive regulation of photosynthesis gene expression in response to anaerobiosis. Also involved in positive regulation of the cbbI and cbbII Calvin cycle CO2 fixation operons, as well as in regulation of expression of genes involved in alternative CO2 fixation pathways. Phosphorylates RegA/PrrA. This chain is Sensor histidine kinase RegB (regB), found in Cereibacter sphaeroides (strain ATCC 17023 / DSM 158 / JCM 6121 / CCUG 31486 / LMG 2827 / NBRC 12203 / NCIMB 8253 / ATH 2.4.1.) (Rhodobacter sphaeroides).